The primary structure comprises 459 residues: MDQSKRYADLSLQEAALIAGGQHILCAYKMAPKDGLNYLEAAAHFAAESSTGTNVEVCTTDDFTRDVDALVYYVNEATEDMRIAYPLALFDRNITDGRFMLVSFLTLAVGNNQGMGDIKHAKMIDFYVPERVIQMFDGPAKDISDLWRILGRPVKDGGFIVGTIIKPKLGLRPEPFAQAAYQFWLGGDFIKNDEPQGNQVFSPIKKTLPLVYDALKRAQDETGQAKLFSMNITADDHFEMCARADFALETFGADADKLAFLVDGFVGGPGMVTTARRQYPNQYLHYHRGGHGMVTSPSSKRGYTALVLAKMSRLQGASGIHVGTMGHGKMEGAGDDRVMAYMIERDECQGPVYFQKWYGIKPTTPIVSGGMNALRLPGFFDNLGHGNIINTAGGGSYGHLDSPAAGAVSLRQAYECWKAGADPIEWAKEHREFARAFESFPQDADRLFAGWRDKLGVGA.

A substrate-binding site is contributed by asparagine 111. Residue lysine 166 is the Proton acceptor of the active site. Lysine 168 is a binding site for substrate. Mg(2+) contacts are provided by lysine 191, aspartate 193, and glutamate 194. N6-carboxylysine is present on lysine 191. Histidine 287 acts as the Proton acceptor in catalysis. 3 residues coordinate substrate: arginine 288, histidine 321, and serine 368.

Belongs to the RuBisCO large chain family. Type II subfamily. Homodimer. Mg(2+) serves as cofactor.

It catalyses the reaction 2 (2R)-3-phosphoglycerate + 2 H(+) = D-ribulose 1,5-bisphosphate + CO2 + H2O. The enzyme catalyses D-ribulose 1,5-bisphosphate + O2 = 2-phosphoglycolate + (2R)-3-phosphoglycerate + 2 H(+). RuBisCO catalyzes two reactions: the carboxylation of D-ribulose 1,5-bisphosphate, the primary event in carbon dioxide fixation, as well as the oxidative fragmentation of the pentose substrate. Both reactions occur simultaneously and in competition at the same active site. This chain is Ribulose bisphosphate carboxylase, found in Albidiferax ferrireducens (strain ATCC BAA-621 / DSM 15236 / T118) (Rhodoferax ferrireducens).